The primary structure comprises 449 residues: uncharacterized protein (449 aa).

Positions 3–61 constitute a TRAM domain; the sequence is VWQQGATIELRIDSLSHTGEGVGRWQDRVVFVADTVPGDRLRVRLTHVKRQYAHGKVLE. [4Fe-4S] cluster-binding residues include Cys-74, Cys-80, Cys-83, and Cys-161. Gln-283, Tyr-312, Glu-333, and Asp-378 together coordinate S-adenosyl-L-methionine. Residue Cys-405 is the Nucleophile of the active site.

It belongs to the class I-like SAM-binding methyltransferase superfamily. RNA M5U methyltransferase family.

This is an uncharacterized protein from Thermosynechococcus vestitus (strain NIES-2133 / IAM M-273 / BP-1).